The sequence spans 470 residues: MSNIGKITQVIGAVVDVEFADGNLPNILNALVIKNPNNADCPELICEVAQHLGDNVVRTIAMDATEGLVRGMEVTDTGNPIMVPVGSASLGRIMNVVGRPVDEMGDIDAAKSLPIHRPAPEFNEQNTNVELLETGIKVVDLLIPFPKGGKMGLFGGAGVGKTVILMEMINNIAKQHGGISVFAGVGERTREGNDLYHEMKDAGVLEKAALVYGQMNEPPGARARVALTALACAEYFRDEENQDVLLFVDNIFRFTQAGSEVSALLGRMPSAVGYQPTLGTDLGGLQERITSTTKGSITSVQAVYVPADDLTDPAPATTFSHLDGTLVLSRQIAELGIYPAVDPLDSTSRILDPNVVGAEHYSVAREVQMVLQKYKDLQDIIAILGMDELSDEDKQTVARARRIQRFLSQPFHVAEVFTGTPGVYVKLEETIKAFRGILNGEYDHLAENDFYMVGGIEMAVERYNQRQQAA.

155–162 lines the ATP pocket; that stretch reads GGAGVGKT.

The protein belongs to the ATPase alpha/beta chains family. F-type ATPases have 2 components, CF(1) - the catalytic core - and CF(0) - the membrane proton channel. CF(1) has five subunits: alpha(3), beta(3), gamma(1), delta(1), epsilon(1). CF(0) has three main subunits: a(1), b(2) and c(9-12). The alpha and beta chains form an alternating ring which encloses part of the gamma chain. CF(1) is attached to CF(0) by a central stalk formed by the gamma and epsilon chains, while a peripheral stalk is formed by the delta and b chains.

The protein localises to the cell inner membrane. It catalyses the reaction ATP + H2O + 4 H(+)(in) = ADP + phosphate + 5 H(+)(out). In terms of biological role, produces ATP from ADP in the presence of a proton gradient across the membrane. The catalytic sites are hosted primarily by the beta subunits. The protein is ATP synthase subunit beta of Oleidesulfovibrio alaskensis (strain ATCC BAA-1058 / DSM 17464 / G20) (Desulfovibrio alaskensis).